The primary structure comprises 529 residues: MKIPFKPFILFHLTLFIRFILTPQIQYYIKSGGNHLSFLSRLFGPKPIIAKSRFITIEDTKTAPFTKKTVGSGYSMRPDVYYIVASVELGNTTTKCILTATNLNTSRTYLLDKTVKMTRDIRPPREREEVFGKTVWGVELTKEAVSELVRDTILESLRRAKVDIERDLDFVVRSTGVTAGFGSPEEVGKLIIALADGCLAAGIPPRKMAPALSKENIPERLREFCYLDRVIFDGAVASVIPPTGREVVANEMEGELVTAGIKVGSKWTNVDYRNPCVSLDFGTTLAGRIVNADEPYARTVGNFCGLAGAIPDAIIRGTEMVDCRGGAALDLYKKSILKGANWKKARRHAERIHDEIIDIRKVPANRKRFGTVPVDTEAAYSAGTTLIGCDAGKNGDKLPELTEIGHSIYQEDGIHTLFATLDHVSALIAKRLIDEAFEEGVIEEGSVLGVTGRAGITGTKPSLILEYVKDRFRDCIFVSDALAMGAAVMARCMNSMGTPHKPLGGRQNGPCILGMRRKLQSRKEDKWIE.

It to M.jannaschii MJ1451.

This is an uncharacterized protein from Methanothermobacter thermautotrophicus (strain ATCC 29096 / DSM 1053 / JCM 10044 / NBRC 100330 / Delta H) (Methanobacterium thermoautotrophicum).